The primary structure comprises 48 residues: uncharacterized protein (48 aa).

This sequence belongs to the ELIP/psbS family.

It localises to the plastid. The protein resides in the chloroplast. Possible role in chlorophyll and/or carotenoid binding. This is an uncharacterized protein from Porphyra purpurea (Red seaweed).